Consider the following 1479-residue polypeptide: Type VII secretion system protein EssC (1479 aa).

The Cytoplasmic segment spans residues 1-229 (MHKLIIKYNK…RPPQPIQKNN (229 aa)). Residues 230–252 (TVIWRSIIPPLVMIALTVVIFLV) traverse the membrane as a helical segment. At 253 to 256 (RPIG) the chain is on the extracellular side. A helical transmembrane segment spans residues 257 to 279 (IYILMMIGMSTVTIVFGITTYFS). The Cytoplasmic segment spans residues 280–1479 (EKKKYNKDVE…QAYQKIRWFK (1200 aa)). 2 FtsK domains span residues 652–846 (DDIL…QDSN) and 997–1183 (QGPM…SEVS). Residues 672 to 679 (GTTGSGKS) and 1014 to 1021 (GSPGYGRT) each bind ATP.

Belongs to the EssC family. As to quaternary structure, homooligomer. Interacts with EsaE.

The protein localises to the cell membrane. In terms of biological role, component of the type VII secretion system (Ess). Required for the secretion of substrates including EsxA and EsxB. However, unable to support secretion of the substrate protein EsxC. The sequence is that of Type VII secretion system protein EssC from Staphylococcus aureus (strain Mu50 / ATCC 700699).